The chain runs to 1097 residues: DNA-directed RNA polymerase subunit beta (1097 aa).

The interval 1073-1097 (DVNPRRSTPSRPTYESLGVADYDED) is disordered.

The protein belongs to the RNA polymerase beta chain family. In terms of assembly, in cyanobacteria the RNAP catalytic core is composed of 2 alpha, 1 beta, 1 beta', 1 gamma and 1 omega subunit. When a sigma factor is associated with the core the holoenzyme is formed, which can initiate transcription.

It carries out the reaction RNA(n) + a ribonucleoside 5'-triphosphate = RNA(n+1) + diphosphate. Its function is as follows. DNA-dependent RNA polymerase catalyzes the transcription of DNA into RNA using the four ribonucleoside triphosphates as substrates. The sequence is that of DNA-directed RNA polymerase subunit beta from Synechococcus sp. (strain CC9311).